Here is a 350-residue protein sequence, read N- to C-terminus: Outer membrane protein A (350 aa).

The N-terminal stretch at 1-21 (MKKTAIAIAVALAGFATVAQA) is a signal peptide. 8 consecutive transmembrane segments (beta stranded) span residues 27–37 (TWYAGGKLGWS), 59–70 (QLGAGAFGGYQV), 74–82 (LGFEMGYDW), 100–111 (QAVQLTAKLGYP), 116–124 (LDIYTRLGG), 146–155 (PVFAGGVEWA), 160–167 (IATRLEYQ), and 186–194 (MLSVGVSYR). 4 repeat units span residues 205–206 (AP), 207–208 (AP), 209–210 (AP), and 211–212 (AP). The 4 X 2 AA tandem repeats of A-P stretch occupies residues 205–212 (APAPAPAP). The 129-residue stretch at 214-342 (VTTKTFTLKS…RVAIEVKGYK (129 aa)) folds into the OmpA-like domain. Cysteines 315 and 327 form a disulfide.

The protein belongs to the outer membrane OOP (TC 1.B.6) superfamily. OmpA family. In terms of assembly, monomer and homodimer.

It is found in the cell outer membrane. Its function is as follows. With TolR probably plays a role in maintaining the position of the peptidoglycan cell wall in the periplasm. Acts as a porin with low permeability that allows slow penetration of small solutes; an internal gate slows down solute passage. In terms of biological role, required for conjugation with F-type plasmids; probably serves as the mating receptor on recipient cells. In Klebsiella aerogenes (Enterobacter aerogenes), this protein is Outer membrane protein A.